A 179-amino-acid chain; its full sequence is Acireductone dioxygenase (179 aa).

Fe(2+)-binding residues include His99, His101, Glu105, and His144. Ni(2+) contacts are provided by His99, His101, Glu105, and His144.

The protein belongs to the acireductone dioxygenase (ARD) family. In terms of assembly, monomer. The cofactor is Fe(2+). Ni(2+) is required as a cofactor.

It catalyses the reaction 1,2-dihydroxy-5-(methylsulfanyl)pent-1-en-3-one + O2 = 3-(methylsulfanyl)propanoate + CO + formate + 2 H(+). The enzyme catalyses 1,2-dihydroxy-5-(methylsulfanyl)pent-1-en-3-one + O2 = 4-methylsulfanyl-2-oxobutanoate + formate + 2 H(+). Its pathway is amino-acid biosynthesis; L-methionine biosynthesis via salvage pathway; L-methionine from S-methyl-5-thio-alpha-D-ribose 1-phosphate: step 5/6. Its function is as follows. Catalyzes 2 different reactions between oxygen and the acireductone 1,2-dihydroxy-3-keto-5-methylthiopentene (DHK-MTPene) depending upon the metal bound in the active site. Fe-containing acireductone dioxygenase (Fe-ARD) produces formate and 2-keto-4-methylthiobutyrate (KMTB), the alpha-ketoacid precursor of methionine in the methionine recycle pathway. Ni-containing acireductone dioxygenase (Ni-ARD) produces methylthiopropionate, carbon monoxide and formate, and does not lie on the methionine recycle pathway. The polypeptide is Acireductone dioxygenase (Exiguobacterium sibiricum (strain DSM 17290 / CCUG 55495 / CIP 109462 / JCM 13490 / 255-15)).